The chain runs to 837 residues: Exonuclease 1 (837 aa).

Residues 1–99 (MGIQGLLQFI…RSRRERRQSN (99 aa)) are N-domain. Positions 30, 78, 150, 152, 171, 173, and 225 each coordinate Mg(2+). The interaction with MSH3 stretch occupies residues 129–386 (MAHKVIKAAR…RLEVNSVSHA (258 aa)). The interval 138-229 (RALGVDCLVA…ILSGCDYLAS (92 aa)) is I-domain. Disordered regions lie at residues 345–367 (TMPA…PGTN) and 440–477 (IKEN…PSKM). An interaction with MLH1 region spans residues 387-488 (PQLKEKPSTL…NKFATFLQRR (102 aa)). Positions 449-462 (TSPNSSKMSKSCPD) are enriched in polar residues. Lys480 is subject to N6-acetyllysine. Positions 555 to 589 (NGTHNLSSQIPGNAAVSPEDEAQSSETSKLLGAMS) are disordered. Polar residues predominate over residues 556-565 (GTHNLSSQIP). 2 positions are modified to phosphoserine: Ser589 and Ser601. The interaction with MSH2 stretch occupies residues 591–837 (PSLGTLRSCF…CVRAQRAIFH (247 aa)). A disordered region spans residues 608-740 (EFSRTPSPSA…GLCRSSSMDS (133 aa)). Composition is skewed to polar residues over residues 611 to 623 (RTPS…TLQQ), 665 to 690 (SSRS…SSRD), and 699 to 713 (NNKS…NSKQ). Thr612 carries the post-translational modification Phosphothreonine. Ser614 and Ser666 each carry phosphoserine. Residue Ser737 is modified to Phosphoserine. Positions 778 to 837 (LQTKISELWKNFGFKKDSEKLPSCKKPLSPVKDNIQLTPETEDEIFNKPECVRAQRAIFH) are interaction with MLH1.

It belongs to the XPG/RAD2 endonuclease family. EXO1 subfamily. Interacts with the MLH1-PMS2 heterodimer via MLH1. Interacts with MSH3. Interacts with the MSH2-MSH6 heterodimer via MSH2, and this interaction may increase the processivity of the 5'-&gt;3' exonuclease activity. Interacts with PCNA, and this interaction may both stimulate the cryptic 3'-&gt;5' exonuclease activity and suppress the 5'-&gt;3' exonuclease activity. Interacts with WRN, and this interaction stimulates both the 5'-&gt;3' exonuclease activity and cleavage of 5'-overhanging flap structures. Interacts with RECQL/RECQ1, and this interaction stimulates cleavage of 5'-overhanging flap structures. Interacts with DNA helicase ZGRF1; the interaction is increased following DNA damage induction. Mg(2+) serves as cofactor. Phosphorylated upon DNA damage and in response to agents stalling DNA replication, probably by ATM or ATR. As to expression, highly expressed in the spleen and testis. Also expressed in the bone marrow, brain, lung, lymph node and thymus.

Its subcellular location is the nucleus. 5'-&gt;3' double-stranded DNA exonuclease which may also possess a cryptic 3'-&gt;5' double-stranded DNA exonuclease activity. Functions in DNA mismatch repair (MMR) to excise mismatch-containing DNA tracts directed by strand breaks located either 5' or 3' to the mismatch. Also exhibits endonuclease activity against 5'-overhanging flap structures similar to those generated by displacement synthesis when DNA polymerase encounters the 5'-end of a downstream Okazaki fragment. Required for somatic hypermutation (SHM) and class switch recombination (CSR) of immunoglobulin genes. Essential for male and female meiosis. This Mus musculus (Mouse) protein is Exonuclease 1 (Exo1).